Consider the following 248-residue polypeptide: Ribonuclease 3 (248 aa).

Positions 15-142 constitute an RNase III domain; sequence LKAFFKQYHV…MIAALYLDLG (128 aa). Mg(2+) is bound at residue E55. The active site involves D59. Positions 128 and 131 each coordinate Mg(2+). Residue E131 is part of the active site. The region spanning 169 to 240 is the DRBM domain; that stretch reads DYKTELQEFL…ARDALQKLAT (72 aa).

It belongs to the ribonuclease III family. In terms of assembly, homodimer. The cofactor is Mg(2+).

It localises to the cytoplasm. It carries out the reaction Endonucleolytic cleavage to 5'-phosphomonoester.. Functionally, digests double-stranded RNA. Involved in the processing of primary rRNA transcript to yield the immediate precursors to the large and small rRNAs (23S and 16S). Processes some mRNAs, and tRNAs when they are encoded in the rRNA operon. Processes pre-crRNA and tracrRNA of type II CRISPR loci if present in the organism. The sequence is that of Ribonuclease 3 from Spiroplasma citri.